The sequence spans 178 residues: Large ribosomal subunit protein uL5 (178 aa).

Belongs to the universal ribosomal protein uL5 family. In terms of assembly, part of the 50S ribosomal subunit; part of the 5S rRNA/L5/L18/L25 subcomplex. Contacts the 5S rRNA and the P site tRNA. Forms a bridge to the 30S subunit in the 70S ribosome.

This is one of the proteins that bind and probably mediate the attachment of the 5S RNA into the large ribosomal subunit, where it forms part of the central protuberance. In the 70S ribosome it contacts protein S13 of the 30S subunit (bridge B1b), connecting the 2 subunits; this bridge is implicated in subunit movement. Contacts the P site tRNA; the 5S rRNA and some of its associated proteins might help stabilize positioning of ribosome-bound tRNAs. This Wolbachia pipientis subsp. Culex pipiens (strain wPip) protein is Large ribosomal subunit protein uL5.